A 272-amino-acid chain; its full sequence is Hemin import ATP-binding protein HmuV (272 aa).

Positions 2–255 (LNADHLHVAR…EPIARCYGFR (254 aa)) constitute an ABC transporter domain. 34-41 (GRNGAGKS) serves as a coordination point for ATP.

This sequence belongs to the ABC transporter superfamily. Heme (hemin) importer (TC 3.A.1.14.5) family. The complex is composed of two ATP-binding proteins (HmuV), two transmembrane proteins (HmuU) and a solute-binding protein (HmuT).

It is found in the cell inner membrane. Part of the ABC transporter complex HmuTUV involved in hemin import. Responsible for energy coupling to the transport system. This Burkholderia mallei (strain ATCC 23344) protein is Hemin import ATP-binding protein HmuV.